Consider the following 113-residue polypeptide: MPAPRYRSRSCRRVYKRTPGGRTVIHFEKKIPNWPKCGACGRRLNGVMRGRNVELKNAPKTQKRPNRPYGGVLCPECARKLIKDKVRYKFWERKREQPWLPVLPDEEPPEPEE.

This sequence belongs to the eukaryotic ribosomal protein eL34 family.

In Methanopyrus kandleri (strain AV19 / DSM 6324 / JCM 9639 / NBRC 100938), this protein is Large ribosomal subunit protein eL34.